A 176-amino-acid polypeptide reads, in one-letter code: Mitochondrial inner membrane protein Mpv17 (176 aa).

A run of 4 helical transmembrane segments spans residues 18–38 (VQVLTAGSLMGLGDIISQQLV), 53–73 (TMVSLGCGFVGPVVGGWYKVL), 94–114 (GGFAPCFLGCFLPLVGALNGL), and 131–151 (LITNYYLWPAVQLANFYLVPL).

Belongs to the peroxisomal membrane protein PXMP2/4 family. As to expression, ubiquitous. Expressed in pancreas, kidney, muscle, liver, lung, placenta, brain and heart.

Its subcellular location is the mitochondrion inner membrane. Functionally, non-selective channel that modulates the membrane potential under normal conditions and oxidative stress, and is involved in mitochondrial homeostasis. Involved in mitochondrial deoxynucleoside triphosphates (dNTP) pool homeostasis and mitochondrial DNA (mtDNA) maintenance. May be involved in the regulation of reactive oxygen species metabolism and the control of oxidative phosphorylation. This chain is Mitochondrial inner membrane protein Mpv17, found in Homo sapiens (Human).